A 309-amino-acid polypeptide reads, in one-letter code: Elongation factor Ts (309 aa).

The segment at Thr80 to Val83 is involved in Mg(2+) ion dislocation from EF-Tu.

It belongs to the EF-Ts family.

The protein resides in the cytoplasm. Associates with the EF-Tu.GDP complex and induces the exchange of GDP to GTP. It remains bound to the aminoacyl-tRNA.EF-Tu.GTP complex up to the GTP hydrolysis stage on the ribosome. This is Elongation factor Ts from Rhodospirillum rubrum (strain ATCC 11170 / ATH 1.1.1 / DSM 467 / LMG 4362 / NCIMB 8255 / S1).